Consider the following 72-residue polypeptide: Phaiodotoxin-3 (72 aa).

Positions 1 to 72 (KFIRHKDESF…CFGALESKCA (72 aa)) constitute an LCN-type CS-alpha/beta domain. Disulfide bonds link C13-C38, C23-C50, C27-C52, and C63-C71.

Belongs to the long (4 C-C) scorpion toxin superfamily. Sodium channel inhibitor family. As to expression, expressed by the venom gland.

Its subcellular location is the secreted. Its function is as follows. Sodium channel (Nav) specific neurotoxin. In Anuroctonus phaiodactylus (Mafia scorpion), this protein is Phaiodotoxin-3.